The chain runs to 359 residues: Spermine synthase (359 aa).

Positions 53–304 (SGWFSEPHPR…GVIGFVLCST (252 aa)) constitute a PABS domain. An S-adenosyl 3-(methylsulfanyl)propylamine-binding site is contributed by Gln99. Tyr129 contributes to the spermidine binding site. Gln130 serves as a coordination point for S-adenosyl 3-(methylsulfanyl)propylamine. Asp154 is a binding site for spermidine. Residues Glu174 and 205 to 206 (DA) each bind S-adenosyl 3-(methylsulfanyl)propylamine. Asp224 (proton acceptor) is an active-site residue. A putrescine-binding site is contributed by Tyr292.

It belongs to the spermidine/spermine synthase family. As to quaternary structure, heterodimer. Component of a multiprotein complex. Interacts with SPDSYN1 and SPDSYN2. In terms of tissue distribution, expressed predominantly in stem internodes, flower buds and roots.

It catalyses the reaction S-adenosyl 3-(methylsulfanyl)propylamine + spermidine = spermine + S-methyl-5'-thioadenosine + H(+). The protein operates within amine and polyamine biosynthesis; spermine biosynthesis; spermine from spermidine: step 1/1. The polypeptide is Spermine synthase (SPMS) (Arabidopsis thaliana (Mouse-ear cress)).